Reading from the N-terminus, the 544-residue chain is Membrane protein insertase YidC (544 aa).

The next 5 membrane-spanning stretches (helical) occupy residues N6–D26, K343–V363, L418–L438, L456–I476, and P497–V517.

This sequence belongs to the OXA1/ALB3/YidC family. Type 1 subfamily. As to quaternary structure, interacts with the Sec translocase complex via SecD. Specifically interacts with transmembrane segments of nascent integral membrane proteins during membrane integration.

Its subcellular location is the cell inner membrane. In terms of biological role, required for the insertion and/or proper folding and/or complex formation of integral membrane proteins into the membrane. Involved in integration of membrane proteins that insert both dependently and independently of the Sec translocase complex, as well as at least some lipoproteins. Aids folding of multispanning membrane proteins. In Pectobacterium atrosepticum (strain SCRI 1043 / ATCC BAA-672) (Erwinia carotovora subsp. atroseptica), this protein is Membrane protein insertase YidC.